The sequence spans 313 residues: Adhesin MafA 2 (313 aa).

An N-terminal signal peptide occupies residues 1 to 14 (MKTLLLLIPLVLTA). The N-palmitoyl cysteine moiety is linked to residue C15. The S-diacylglycerol cysteine moiety is linked to residue C15. The span at 282-297 (GDTTAQNRPDFKQNNG) shows a compositional bias: polar residues. A disordered region spans residues 282-313 (GDTTAQNRPDFKQNNGKKPDVGNEVIRRRKGG).

It belongs to the MafA family.

The protein resides in the cell outer membrane. This Neisseria meningitidis serogroup C / serotype 2a (strain ATCC 700532 / DSM 15464 / FAM18) protein is Adhesin MafA 2 (mafA2).